Consider the following 724-residue polypeptide: Propionyl-CoA carboxylase alpha chain, mitochondrial (724 aa).

The transit peptide at 1–48 (MAGQWVRTVALLAARRHWRRSSQQQLLGTLKHAPVYSYQCLVVSRSLS) directs the protein to the mitochondrion. In terms of domain architecture, Biotin carboxylation spans 58–505 (TFDKILIANR…STKFLSDVYP (448 aa)). Lysine 61 carries the post-translational modification N6-acetyllysine; alternate. N6-succinyllysine; alternate is present on lysine 61. At lysine 115 the chain carries N6-succinyllysine. The residue at position 146 (lysine 146) is an N6-acetyllysine; alternate. Lysine 146 carries the N6-succinyllysine; alternate modification. Lysine 150 is subject to N6-acetyllysine. Lysine 173 provides a ligand contact to ATP. Residues 177-374 (KLLAKRAKVN…LVQEMILVAK (198 aa)) enclose the ATP-grasp domain. Residue lysine 184 is modified to N6-succinyllysine. Lysine 196 carries the post-translational modification N6-acetyllysine; alternate. Lysine 196 is subject to N6-succinyllysine; alternate. ATP contacts are provided by residues 205–266 (AREI…PRHI), glutamate 257, and asparagine 292. At serine 248 the chain carries Phosphoserine. Lysine 258 is subject to N6-succinyllysine. Lysine 324 carries the N6-acetyllysine; alternate modification. Lysine 324 bears the N6-succinyllysine; alternate mark. Mg(2+)-binding residues include glutamate 332, glutamate 345, and asparagine 347. Mn(2+)-binding residues include glutamate 332, glutamate 345, and asparagine 347. Arginine 349 is a catalytic residue. N6-succinyllysine is present on residues lysine 381 and lysine 403. Phenylalanine 405 provides a ligand contact to biotin. Lysine 492 is modified (N6-acetyllysine). Lysine 498, lysine 509, lysine 554, and lysine 644 each carry N6-succinyllysine. One can recognise a Biotinyl-binding domain in the interval 645-724 (FMLEKVPKDT…GEGDLLVELE (80 aa)). N6-biotinyllysine; by HLCS is present on lysine 690.

In terms of assembly, the holoenzyme is a dodecamer composed of 6 PCCA/alpha subunits and 6 PCCB/beta subunits. Interacts (via the biotin carboxylation domain) with SIRT4. Interacts with SIRT3 and SIRT5. It depends on Mg(2+) as a cofactor. Requires Mn(2+) as cofactor. Biotin serves as cofactor. In terms of processing, acetylated. Post-translationally, the biotin cofactor is covalently attached to the C-terminal biotinyl-binding domain and is required for the catalytic activity. Biotinylation is catalyzed by HLCS.

It is found in the mitochondrion matrix. It catalyses the reaction propanoyl-CoA + hydrogencarbonate + ATP = (S)-methylmalonyl-CoA + ADP + phosphate + H(+). It carries out the reaction butanoyl-CoA + hydrogencarbonate + ATP = (2S)-ethylmalonyl-CoA + ADP + phosphate + H(+). It participates in metabolic intermediate metabolism; propanoyl-CoA degradation; succinyl-CoA from propanoyl-CoA: step 1/3. In terms of biological role, this is one of the 2 subunits of the biotin-dependent propionyl-CoA carboxylase (PCC), a mitochondrial enzyme involved in the catabolism of odd chain fatty acids, branched-chain amino acids isoleucine, threonine, methionine, and valine and other metabolites. Propionyl-CoA carboxylase catalyzes the carboxylation of propionyl-CoA/propanoyl-CoA to D-methylmalonyl-CoA/(S)-methylmalonyl-CoA. Within the holoenzyme, the alpha subunit catalyzes the ATP-dependent carboxylation of the biotin carried by the biotin carboxyl carrier (BCC) domain, while the beta subunit then transfers the carboxyl group from carboxylated biotin to propionyl-CoA. Propionyl-CoA carboxylase also significantly acts on butyryl-CoA/butanoyl-CoA, which is converted to ethylmalonyl-CoA/(2S)-ethylmalonyl-CoA. Other alternative minor substrates include (2E)-butenoyl-CoA/crotonoyl-CoA. This Mus musculus (Mouse) protein is Propionyl-CoA carboxylase alpha chain, mitochondrial.